The following is a 569-amino-acid chain: ATP-dependent RNA helicase dhh1 (569 aa).

Polar residues predominate over residues 1–16; the sequence is MSDQLADQLKATSLSS. A disordered region spans residues 1 to 39; sequence MSDQLADQLKATSLSSGPEDWKKGLNLPARDTRQQTEDV. Residues 45–73 carry the Q motif motif; it reads LDWEDFIHDRDLLMGIFEAGFEKPSPIQE. Residues 76-246 form the Helicase ATP-binding domain; it reads IPVALTGRDI…DKNMTSPYEI (171 aa). An ATP-binding site is contributed by 89–96; it reads AKNGTGKT. The DEAD box signature appears at 194 to 197; it reads DEAD. The Helicase C-terminal domain occupies 256-416; that stretch reads GITQYYAFVE…PIPQTIDKSL (161 aa). The disordered stretch occupies residues 436–569; that stretch reads AQQPQQQLQQ…GQPQGPLSAQ (134 aa). The segment covering 437 to 482 has biased composition (low complexity); it reads QQPQQQLQQSQRPQQSQQQQHFSTQTQPSNQLPPQQGNQQLGFNPQ. Residues 495-520 are compositionally biased toward polar residues; sequence GDWQGQNGRQNGTGASNNQPRPTNYQ. The segment covering 529-542 has biased composition (gly residues); sequence SRGGRGRGFQGQGG. A compositionally biased stretch (low complexity) spans 543–569; that stretch reads RQNQNYGGQRGPRTQGQGQPQGPLSAQ.

Belongs to the DEAD box helicase family. DDX6/DHH1 subfamily.

Its subcellular location is the cytoplasm. The protein localises to the P-body. The catalysed reaction is ATP + H2O = ADP + phosphate + H(+). Its function is as follows. ATP-dependent RNA helicase involved in mRNA turnover, and more specifically in mRNA decapping. Is involved in G1/S DNA-damage checkpoint recovery, probably through the regulation of the translational status of a subset of mRNAs. May also have a role in translation and mRNA nuclear export. The protein is ATP-dependent RNA helicase dhh1 (drh-10) of Neurospora crassa (strain ATCC 24698 / 74-OR23-1A / CBS 708.71 / DSM 1257 / FGSC 987).